The chain runs to 154 residues: Xanthine-guanine phosphoribosyltransferase (154 aa).

5-phospho-alpha-D-ribose 1-diphosphate contacts are provided by residues 37-38 (RG), R69, and 88-96 (EDLVDSGDT). A GMP-binding site is contributed by R69. D89 is a Mg(2+) binding site. Residues D92 and I135 each coordinate guanine. Residues D92 and I135 each coordinate xanthine. GMP is bound by residues 92–96 (DSGDT) and 134–135 (WI).

The protein belongs to the purine/pyrimidine phosphoribosyltransferase family. XGPT subfamily. In terms of assembly, homotetramer. The cofactor is Mg(2+).

The protein localises to the cell inner membrane. The enzyme catalyses GMP + diphosphate = guanine + 5-phospho-alpha-D-ribose 1-diphosphate. The catalysed reaction is XMP + diphosphate = xanthine + 5-phospho-alpha-D-ribose 1-diphosphate. It carries out the reaction IMP + diphosphate = hypoxanthine + 5-phospho-alpha-D-ribose 1-diphosphate. Its pathway is purine metabolism; GMP biosynthesis via salvage pathway; GMP from guanine: step 1/1. The protein operates within purine metabolism; XMP biosynthesis via salvage pathway; XMP from xanthine: step 1/1. Functionally, purine salvage pathway enzyme that catalyzes the transfer of the ribosyl-5-phosphate group from 5-phospho-alpha-D-ribose 1-diphosphate (PRPP) to the N9 position of the 6-oxopurines guanine and xanthine to form the corresponding ribonucleotides GMP (guanosine 5'-monophosphate) and XMP (xanthosine 5'-monophosphate), with the release of PPi. To a lesser extent, also acts on hypoxanthine. In Vibrio campbellii (strain ATCC BAA-1116), this protein is Xanthine-guanine phosphoribosyltransferase.